A 208-amino-acid chain; its full sequence is Protein-methionine-sulfoxide reductase heme-binding subunit MsrQ (208 aa).

The next 6 helical transmembrane spans lie at 16-36 (IAVF…FVGG), 53-73 (WGLI…LWGW), 82-102 (MVGL…IGLD), 118-138 (TYIT…VTST), 156-176 (LVYP…KADL), and 178-198 (EPLI…VPAV).

The protein belongs to the MsrQ family. In terms of assembly, heterodimer of a catalytic subunit (MsrP) and a heme-binding subunit (MsrQ). FMN serves as cofactor. Heme b is required as a cofactor.

It is found in the cell inner membrane. In terms of biological role, part of the MsrPQ system that repairs oxidized periplasmic proteins containing methionine sulfoxide residues (Met-O), using respiratory chain electrons. Thus protects these proteins from oxidative-stress damage caused by reactive species of oxygen and chlorine generated by the host defense mechanisms. MsrPQ is essential for the maintenance of envelope integrity under bleach stress, rescuing a wide series of structurally unrelated periplasmic proteins from methionine oxidation. MsrQ provides electrons for reduction to the reductase catalytic subunit MsrP, using the quinone pool of the respiratory chain. This chain is Protein-methionine-sulfoxide reductase heme-binding subunit MsrQ, found in Rhodospirillum rubrum (strain ATCC 11170 / ATH 1.1.1 / DSM 467 / LMG 4362 / NCIMB 8255 / S1).